We begin with the raw amino-acid sequence, 413 residues long: Peptidase T (413 aa).

A Zn(2+)-binding site is contributed by histidine 82. Aspartate 84 is an active-site residue. Residue aspartate 145 participates in Zn(2+) binding. The active-site Proton acceptor is the glutamate 179. Zn(2+) is bound by residues glutamate 180, aspartate 202, and histidine 384.

Belongs to the peptidase M20B family. Zn(2+) serves as cofactor.

The protein resides in the cytoplasm. It catalyses the reaction Release of the N-terminal residue from a tripeptide.. In terms of biological role, cleaves the N-terminal amino acid of tripeptides. In Latilactobacillus sakei subsp. sakei (strain 23K) (Lactobacillus sakei subsp. sakei), this protein is Peptidase T.